Reading from the N-terminus, the 612-residue chain is Glutamine--fructose-6-phosphate aminotransferase [isomerizing] (612 aa).

Cys2 (nucleophile; for GATase activity) is an active-site residue. The 219-residue stretch at 2–220 (CGIVGAIRAH…DGDIALLASD (219 aa)) folds into the Glutamine amidotransferase type-2 domain. 2 SIS domains span residues 288-428 (AKSV…VRGL) and 461-602 (WAQQ…VDKP). Lys607 functions as the For Fru-6P isomerization activity in the catalytic mechanism.

As to quaternary structure, homodimer.

The protein localises to the cytoplasm. The catalysed reaction is D-fructose 6-phosphate + L-glutamine = D-glucosamine 6-phosphate + L-glutamate. Catalyzes the first step in hexosamine metabolism, converting fructose-6P into glucosamine-6P using glutamine as a nitrogen source. This chain is Glutamine--fructose-6-phosphate aminotransferase [isomerizing], found in Neisseria meningitidis serogroup B (strain ATCC BAA-335 / MC58).